Reading from the N-terminus, the 257-residue chain is Succinate dehydrogenase subunit 5, mitochondrial (257 aa).

The N-terminal 89 residues, 1–89 (MGTLGRAIHT…AMGMGQVRRF (89 aa)), are a transit peptide targeting the mitochondrion.

Component of complex II composed of eight subunits in plants: four classical SDH subunits SDH1, SDH2, SDH3 and SDH4 (a flavoprotein (FP), an iron-sulfur protein (IP), and a cytochrome b composed of a large and a small subunit.), as well as four subunits unknown in mitochondria from bacteria and heterotrophic eukaryotes.

The protein resides in the mitochondrion inner membrane. It functions in the pathway carbohydrate metabolism; tricarboxylic acid cycle. This is Succinate dehydrogenase subunit 5, mitochondrial from Arabidopsis thaliana (Mouse-ear cress).